A 339-amino-acid polypeptide reads, in one-letter code: Protein RecA (339 aa).

Residue 73-80 coordinates ATP; sequence GPESSGKT.

Belongs to the RecA family.

It is found in the cytoplasm. Functionally, can catalyze the hydrolysis of ATP in the presence of single-stranded DNA, the ATP-dependent uptake of single-stranded DNA by duplex DNA, and the ATP-dependent hybridization of homologous single-stranded DNAs. It interacts with LexA causing its activation and leading to its autocatalytic cleavage. This Mycoplasmopsis pulmonis (strain UAB CTIP) (Mycoplasma pulmonis) protein is Protein RecA.